The following is a 458-amino-acid chain: Bifunctional thioredoxin reductase/thioredoxin (458 aa).

The segment at 1–321 is thioredoxin reductase; it reads MNTTPSAHET…LAEHAGSKAN (321 aa). Residues 19–22, 41–48, Asn57, and Val90 contribute to the FAD site; these read SGPA and EGTSFGGA. The cysteines at positions 142 and 145 are disulfide-linked. Positions 163, 182, 188, 245, and 265 each coordinate NADP(+). Residues Asp285 and 292 to 295 each bind FAD; that span reads RQAI. Position 292 (Arg292) interacts with NADP(+). Positions 322–347 are linker; the sequence is ETTEETGDVDSTDTTDWSTAMTDAKN. The Thioredoxin domain occupies 341-455; the sequence is AMTDAKNAGV…LLRDLSDVVP (115 aa). An intrachain disulfide couples Cys379 to Cys382.

In the N-terminal section; belongs to the class-II pyridine nucleotide-disulfide oxidoreductase family. Homodimer. Requires FAD as cofactor.

It localises to the cytoplasm. The enzyme catalyses [thioredoxin]-dithiol + NADP(+) = [thioredoxin]-disulfide + NADPH + H(+). The polypeptide is Bifunctional thioredoxin reductase/thioredoxin (trxB/A) (Mycobacterium leprae (strain TN)).